We begin with the raw amino-acid sequence, 85 residues long: Large ribosomal subunit protein bL27 (85 aa).

The protein belongs to the bacterial ribosomal protein bL27 family.

The sequence is that of Large ribosomal subunit protein bL27 from Mycobacteroides abscessus (strain ATCC 19977 / DSM 44196 / CCUG 20993 / CIP 104536 / JCM 13569 / NCTC 13031 / TMC 1543 / L948) (Mycobacterium abscessus).